Consider the following 617-residue polypeptide: Sodium-dependent noradrenaline transporter (617 aa).

Residues 1–23 form a disordered region; it reads MLLARMNPQVQPENNGADTGPEQ. The Cytoplasmic portion of the chain corresponds to 1-62; sequence MLLARMNPQV…AQPRETWGKK (62 aa). Polar residues predominate over residues 8 to 17; it reads PQVQPENNGA. A helical membrane pass occupies residues 63 to 88; the sequence is IDFLLSVVGFAVDLANVWRFPYLCYK. Na(+)-binding residues include G71, A73, and V74. (R)-noradrenaline is bound at residue D75. D75 contacts dopamine. N78 contributes to the Na(+) binding site. Positions 87 and 88 each coordinate (R)-noradrenaline. Topologically, residues 89 to 92 are extracellular; the sequence is NGGG. A helical transmembrane segment spans residues 93–116; that stretch reads AFLIPYTLFLIIAGMPLFYMELAL. Residues 117–135 lie on the Cytoplasmic side of the membrane; the sequence is GQYNREGAATVWKICPFFK. The chain crosses the membrane as a helical span at residues 136-166; that stretch reads GVGYAVILIALYVGFYYNVIIAWSLYYLFSS. (R)-noradrenaline contacts are provided by A145 and G149. A145 contacts dopamine. Residues 167–233 are Extracellular-facing; that stretch reads FTLNLPWTDC…SSGIHDIGLP (67 aa). A disulfide bridge links C176 with C185. Residues N184, N192, and N198 are each glycosylated (N-linked (GlcNAc...) asparagine). A helical transmembrane segment spans residues 234–254; it reads QWQLLLCLMVVVIVLYFSLWK. The Cytoplasmic segment spans residues 255-257; sequence GVK. The chain crosses the membrane as a helical span at residues 258–282; that stretch reads TSGKVVWITATLPYFVLFVLLVHGV. Residues 283–306 are Extracellular-facing; that stretch reads TLPGASNGINAYLHIDFYRLKEAT. The chain crosses the membrane as a helical span at residues 307 to 332; it reads VWIDAATQIFFSLGAGFGVLIAFASY. F317 lines the (R)-noradrenaline pocket. F317 contacts dopamine. S318 contributes to the Na(+) binding site. The Cytoplasmic segment spans residues 333–338; that stretch reads NKFDNN. Residues 339 to 362 form a helical membrane-spanning segment; that stretch reads CYRDALLTSSINCITSFVSGFAIF. N350 contacts Na(+). The Extracellular segment spans residues 363–402; the sequence is SILGYMAHEHKVNIEDVATEGAGLVFILYPEAISTLSGST. Position 382 (E382) interacts with (R)-noradrenaline. E382 is a dopamine binding site. The chain crosses the membrane as a helical span at residues 403–428; that stretch reads FWAVVFFVMLLALGLDSSMGGMEAVI. Na(+)-binding residues include D418 and S419. At 429–443 the chain is on the cytoplasmic side; sequence TGLADDFQVLKRHRK. Residues 444–464 traverse the membrane as a helical segment; the sequence is LFTFGVTFSTFLLALFCITKG. G465 is a topological domain (extracellular). A helical membrane pass occupies residues 466–492; that stretch reads IYVLTLLDTFAAGTSILFAVLMEAIGV. Residues 493–522 are Cytoplasmic-facing; that stretch reads SWFYGVDRFSNDIQQMMGFRPGLYWRLCWK. The helical transmembrane segment at 523–545 threads the bilayer; that stretch reads FVSPAFLLFVVVVSIINFKPLTY. Topologically, residues 546–548 are extracellular; that stretch reads DDY. Residues 549–569 traverse the membrane as a helical segment; the sequence is IFPPWANWVGWGIALSSMVLV. Over 570-617 the chain is Cytoplasmic; it reads PIYVIYKFLSTQGSLWERLAYGITPENEHHLVAQRDIRQFQLQHWLAI.

This sequence belongs to the sodium:neurotransmitter symporter (SNF) (TC 2.A.22) family. SLC6A2 subfamily. Monomer. Can form homodimers in the cell membrane; homodimerization is mostly mediated by cholesterol and lipids, and regulates neurotransmitter transport activity. Interacts with PRKCABP. Post-translationally, palmitoylated; palmitoylation regulates protein levels and neurotransmitter transport.

It localises to the cell membrane. The protein localises to the cell projection. The protein resides in the axon. Its subcellular location is the synapse. It is found in the synaptosome. The catalysed reaction is (R)-noradrenaline(out) + chloride(out) + Na(+)(out) = (R)-noradrenaline(in) + chloride(in) + Na(+)(in). It carries out the reaction dopamine(out) + chloride(out) + Na(+)(out) = dopamine(in) + chloride(in) + Na(+)(in). It catalyses the reaction dopamine(out) + chloride(out) + 2 Na(+)(out) = dopamine(in) + chloride(in) + 2 Na(+)(in). Its activity is regulated as follows. Inhibited by mazindol, desipramine, nomifensine and nortriptyline. Mediates sodium- and chloride-dependent transport of norepinephrine (also known as noradrenaline), the primary signaling neurotransmitter in the autonomic sympathetic nervous system. Is responsible for norepinephrine re-uptake and clearance from the synaptic cleft, thus playing a crucial role in norepinephrine inactivation and homeostasis. Can also mediate sodium- and chloride-dependent transport of dopamine. This is Sodium-dependent noradrenaline transporter from Homo sapiens (Human).